Consider the following 302-residue polypeptide: Putative S-adenosyl-L-methionine-dependent methyltransferase MRA_0290 (302 aa).

Residues aspartate 126 and 155–156 (DL) contribute to the S-adenosyl-L-methionine site.

It belongs to the UPF0677 family.

Its function is as follows. Exhibits S-adenosyl-L-methionine-dependent methyltransferase activity. This is Putative S-adenosyl-L-methionine-dependent methyltransferase MRA_0290 from Mycobacterium tuberculosis (strain ATCC 25177 / H37Ra).